A 354-amino-acid chain; its full sequence is ATP-dependent (S)-NAD(P)H-hydrate dehydratase (354 aa).

The YjeF C-terminal domain maps to 42–350 (AENILRAITP…ECLGRSLEDI (309 aa)). Residues Gly155 and 208–214 (NVNEYKR) each bind (6S)-NADPHX. ATP-binding positions include 248 to 252 (KGKSD) and 267 to 276 (GSPRRCGGQG). Residue Asp277 coordinates (6S)-NADPHX.

Belongs to the NnrD/CARKD family. Requires Mg(2+) as cofactor.

It catalyses the reaction (6S)-NADHX + ATP = ADP + phosphate + NADH + H(+). It carries out the reaction (6S)-NADPHX + ATP = ADP + phosphate + NADPH + H(+). Functionally, catalyzes the dehydration of the S-form of NAD(P)HX at the expense of ATP, which is converted to ADP. Together with NAD(P)HX epimerase, which catalyzes the epimerization of the S- and R-forms, the enzyme allows the repair of both epimers of NAD(P)HX, a damaged form of NAD(P)H that is a result of enzymatic or heat-dependent hydration. In Vitis vinifera (Grape), this protein is ATP-dependent (S)-NAD(P)H-hydrate dehydratase.